The following is a 627-amino-acid chain: Pescadillo homolog (627 aa).

The 94-residue stretch at 321–414 (RLRTLFKGLK…QLLPTNKYFI (94 aa)) folds into the BRCT domain. Disordered regions lie at residues 450 to 469 (HAQSDDDSEDEAQEEEETVD), 488 to 566 (YKKY…MVKP), and 595 to 627 (TIEASEKEARKTAKREARKEAAAAAAKASKLGK). Phosphoserine is present on residues Ser453 and Ser457. Composition is skewed to acidic residues over residues 454–469 (DDDSEDEAQEEEETVD) and 497–521 (VNEDEEDPEDEDDNEDDDEEEEELD). Residues 522-533 (EKTKRLQEEKQK) show a composition bias toward basic and acidic residues. Residues 540-549 (KVHKVNKRQV) are compositionally biased toward basic residues. Basic and acidic residues-rich tracts occupy residues 550 to 559 (HKAEVDEHRL) and 595 to 615 (TIEASEKEARKTAKREARKEA). The stretch at 582–625 (KEKEEWLLRKKRRTIEASEKEARKTAKREARKEAAAAAAKASKL) forms a coiled coil. Residues 616 to 627 (AAAAAKASKLGK) are compositionally biased toward low complexity.

Belongs to the pescadillo family.

It localises to the nucleus. It is found in the nucleolus. Its subcellular location is the nucleoplasm. Functionally, required for maturation of ribosomal RNAs and formation of the large ribosomal subunit. The protein is Pescadillo homolog of Drosophila simulans (Fruit fly).